The chain runs to 842 residues: MSRPLTDQEKRKQISVRGLAGVENVTELKKNFNRHLHFTLVKDRNVATPRDYYFALAYTVRDHLVGRWIRTQQHYYEKDPKRIYYLSLEFYIGRTLQNTMVNLALENACDEATYQLGLDMEELEEIEEDAGLGNGGLGRLAACFLDSMATLGLAAYGYGIRYEFGIFNQKISGGWQMEEADDWLRYGNPWEKARPEFTLPVHFYGRVEHTSQGAKWVDTQVVLAMPYDTPVPGYRNNVVNTMRLWSAKAPNDFNLKDFNVGGYIQAVLDRNLAENISRVLYPNDNFFEGKELRLKQEYFVVAATLQDIIRRFKSSKFGCLDPVRTNFDAFPDKVAIQLNDTHPSLAIPELMRILVDQERLEWEKAWEVTVKTCAYTNHTVLPEALERWPVHLIETLLPRHLQIIYEINQRFLNRVAAAFPGDVDRLRRMSLVEEGAVKRINMAHLCIAGSHAVNGVARIHSEILKKTIFKDFYELEPHKFQNKTNGITPRRWLVMCNPGLAEIIAERIGEEYIADLDQLRKLLSYVDDESFIRDVAKVKQENKLKFSAYLEKEYKVHINPNSLFDIQVKRIHEYKRQLLNCLHVITLYNRIKKEPNKFFVPRTVMIGGKAAPGYHMAKMIIKLITAIGDVVNHDPVVGDRLRVIFLENYRVSLAEKVIPAADLSEQISTAGTEASGTGNMKFMLNGALTIGTMDGANVEMAEEAGEENFFIFGMRVEDVERLDQKGYNAQEYYDRIPELRHVIDQLSSGFFSPKQPDLFKDIVNMLMHHDRFKVFADYEEYIKCQERVSALYKNPREWTRMVIRNIATSGKFSSDRTIAQYAREIWGVEPTRQRMPAPDEKI.

Position 2 is an N-acetylserine (S2). A Phosphoserine; by PHK; in form phosphorylase A modification is found at S15. AMP contacts are provided by D43 and Y76. A phosphotyrosine mark is found at Y204 and Y227. Residue 310–319 (RRFKSSKFGC) coordinates AMP. S430 bears the Phosphoserine mark. At Y473 the chain carries Phosphotyrosine. An N6-(pyridoxal phosphate)lysine modification is found at K681. Residues S747 and S748 each carry the phosphoserine modification.

Belongs to the glycogen phosphorylase family. In terms of assembly, homodimer. Homotetramer; to form the enzymatically active phosphorylase A. Requires pyridoxal 5'-phosphate as cofactor. Phosphorylation of Ser-15 converts phosphorylase B (unphosphorylated) to phosphorylase A.

It carries out the reaction [(1-&gt;4)-alpha-D-glucosyl](n) + phosphate = [(1-&gt;4)-alpha-D-glucosyl](n-1) + alpha-D-glucose 1-phosphate. With respect to regulation, allosterically regulated through the non-covalent binding of metabolites, being activated by AMP and inhibited by ATP, ADP, and glucose-6-phosphate. The activity is also controlled by post-translational modifications including phosphorylation. Allosteric enzyme that catalyzes the rate-limiting step in glycogen catabolism, the phosphorolytic cleavage of glycogen to produce glucose-1-phosphate, and plays a central role in maintaining cellular and organismal glucose homeostasis. This Bos taurus (Bovine) protein is Glycogen phosphorylase, muscle form.